The chain runs to 381 residues: uncharacterized protein (381 aa).

2 disordered regions span residues 1-20 (MPYYTRDDNDVDDFDEFDPT) and 36-381 (IPPS…EDDE). Residues 9 to 18 (NDVDDFDEFD) show a composition bias toward acidic residues. Composition is skewed to basic and acidic residues over residues 166 to 175 (TEVEYGRRPE) and 186 to 237 (SESE…EGYR). Ser339, Ser346, and Ser357 each carry phosphoserine. The span at 364–374 (KKHRHKHHHQK) shows a compositional bias: basic residues.

This is an uncharacterized protein from Arabidopsis thaliana (Mouse-ear cress).